Consider the following 261-residue polypeptide: Kallikrein 1-related peptidase b3 (261 aa).

The signal sequence occupies residues 1-18 (MWFLILFLALSLGGIDAA). Residues 19-24 (PPVQSR) constitute a propeptide, activation peptide. A segment B1 region spans residues 25-107 (IVGGFKCEKN…HPGFNMSLMR (83 aa)). In terms of domain architecture, Peptidase S1 spans 25–258 (IVGGFKCEKN…FTSWIKDTMA (234 aa)). Intrachain disulfides connect Cys31-Cys173, Cys50-Cys66, Cys152-Cys219, Cys184-Cys198, and Cys209-Cys234. The Charge relay system role is filled by His65. N-linked (GlcNAc...) asparagine glycosylation occurs at Asn102. A segment C region spans residues 112–164 (FLEYDYSNDLMLLRLSKPADITDTVKPITLPTEEPKLGSTCLASGWGSITPTK). A segment A region spans residues 112–261 (FLEYDYSNDL…WIKDTMAKNP (150 aa)). Asp120 functions as the Charge relay system in the catalytic mechanism. The tract at residues 165–261 (FQFTDDLYCV…WIKDTMAKNP (97 aa)) is segment B2. Ser213 serves as the catalytic Charge relay system. Residues His231 and Glu236 each coordinate Zn(2+).

It belongs to the peptidase S1 family. Kallikrein subfamily. As to quaternary structure, 7S nerve growth factor is composed of two alpha chains, a beta dimer composed of identical chains, and two gamma chains. It depends on Zn(2+) as a cofactor.

The catalysed reaction is Preferential cleavage of Arg-|-Xaa bonds in small molecule substrates. Highly selective action to release kallidin (lysyl-bradykinin) from kininogen involves hydrolysis of Met-|-Xaa or Leu-|-Xaa.. Functionally, 7S NGF alpha chain stabilizes the 7S complex. The beta dimer promotes neurite growth. The gamma chain is an arginine-specific protease; it may also have plasminogen activator activity, as well as mitogenic activity for chick embryo fibroblasts. The chain is Kallikrein 1-related peptidase b3 (Klk1b3) from Mus musculus (Mouse).